A 143-amino-acid polypeptide reads, in one-letter code: Anti-sigma F factor (143 aa).

The protein belongs to the anti-sigma-factor family.

The catalysed reaction is L-seryl-[protein] + ATP = O-phospho-L-seryl-[protein] + ADP + H(+). It catalyses the reaction L-threonyl-[protein] + ATP = O-phospho-L-threonyl-[protein] + ADP + H(+). Functionally, binds to sigma F and blocks its ability to form an RNA polymerase holoenzyme (E-sigma F). Phosphorylates SpoIIAA on a serine residue. This phosphorylation may enable SpoIIAA to act as an anti-anti-sigma factor that counteracts SpoIIAB and thus releases sigma F from inhibition. This is Anti-sigma F factor from Clostridium novyi (strain NT).